The sequence spans 208 residues: Small ribosomal subunit protein uS4 (208 aa).

An S4 RNA-binding domain is found at 98 to 161; the sequence is QRLDNVVYRM…KTNPQIVRAI (64 aa).

Belongs to the universal ribosomal protein uS4 family. Part of the 30S ribosomal subunit. Contacts protein S5. The interaction surface between S4 and S5 is involved in control of translational fidelity.

In terms of biological role, one of the primary rRNA binding proteins, it binds directly to 16S rRNA where it nucleates assembly of the body of the 30S subunit. Its function is as follows. With S5 and S12 plays an important role in translational accuracy. This chain is Small ribosomal subunit protein uS4, found in Campylobacter fetus subsp. fetus (strain 82-40).